Consider the following 303-residue polypeptide: N-acetyl-D-glucosamine kinase (303 aa).

ATP-binding positions include 4 to 11 (GFDIGGTK) and 133 to 140 (GVGGGLIF). Positions 157, 177, 179, and 184 each coordinate Zn(2+).

This sequence belongs to the ROK (NagC/XylR) family. NagK subfamily.

It carries out the reaction N-acetyl-D-glucosamine + ATP = N-acetyl-D-glucosamine 6-phosphate + ADP + H(+). The protein operates within cell wall biogenesis; peptidoglycan recycling. In terms of biological role, catalyzes the phosphorylation of N-acetyl-D-glucosamine (GlcNAc) derived from cell-wall degradation, yielding GlcNAc-6-P. This is N-acetyl-D-glucosamine kinase from Escherichia coli O139:H28 (strain E24377A / ETEC).